Here is a 161-residue protein sequence, read N- to C-terminus: Regulator of ribonuclease activity A (161 aa).

The protein belongs to the RraA family. Homotrimer. Binds to both RNA-binding sites in the C-terminal region of Rne and to RhlB.

The protein resides in the cytoplasm. Its function is as follows. Globally modulates RNA abundance by binding to RNase E (Rne) and regulating its endonucleolytic activity. Can modulate Rne action in a substrate-dependent manner by altering the composition of the degradosome. Modulates RNA-binding and helicase activities of the degradosome. The polypeptide is Regulator of ribonuclease activity A (Salmonella agona (strain SL483)).